Consider the following 411-residue polypeptide: Acetylornithine aminotransferase (411 aa).

Residues 107–108 (GT) and F141 contribute to the pyridoxal 5'-phosphate site. Residue R144 participates in N(2)-acetyl-L-ornithine binding. 227-230 (DEIQ) contributes to the pyridoxal 5'-phosphate binding site. K256 bears the N6-(pyridoxal phosphate)lysine mark. Residue T284 participates in N(2)-acetyl-L-ornithine binding. T285 provides a ligand contact to pyridoxal 5'-phosphate.

This sequence belongs to the class-III pyridoxal-phosphate-dependent aminotransferase family. ArgD subfamily. As to quaternary structure, homodimer. It depends on pyridoxal 5'-phosphate as a cofactor.

The protein localises to the cytoplasm. It catalyses the reaction N(2)-acetyl-L-ornithine + 2-oxoglutarate = N-acetyl-L-glutamate 5-semialdehyde + L-glutamate. The protein operates within amino-acid biosynthesis; L-arginine biosynthesis; N(2)-acetyl-L-ornithine from L-glutamate: step 4/4. The polypeptide is Acetylornithine aminotransferase (Xylella fastidiosa (strain Temecula1 / ATCC 700964)).